We begin with the raw amino-acid sequence, 175 residues long: R-phycoerythrin subunit beta (175 aa).

Cys82 contacts (2R,3E)-phycoerythrobilin.

This sequence belongs to the phycobiliprotein family. In terms of assembly, homodimer. Post-translationally, contains one covalently linked phycoerythrobilin chromophore.

Functionally, green-light absorbing phycoerythrin of unknown function. In Prochlorococcus marinus subsp. pastoris (strain CCMP1986 / NIES-2087 / MED4), this protein is R-phycoerythrin subunit beta (cpeB).